A 750-amino-acid polypeptide reads, in one-letter code: Photosystem I P700 chlorophyll a apoprotein A1 (750 aa).

Helical transmembrane passes span 70-93, 156-179, 195-219, 291-309, 346-369, 385-411, 433-455, and 531-549; these read IFSA…FHGA, LYCT…FHYH, LNHH…HVSL, IAHH…GHMY, WHAQ…HHMY, LSLF…IFMV, AIIS…LYIH, and FLVH…LILL. Positions 573 and 582 each coordinate [4Fe-4S] cluster. The next 2 helical transmembrane spans lie at 589–610 and 664–686; these read HVFL…HFSW and LSAY…MFLF. A chlorophyll a'-binding site is contributed by His675. Chlorophyll a contacts are provided by Met683 and Tyr691. Residue Trp692 participates in phylloquinone binding. Residues 724 to 744 form a helical membrane-spanning segment; the sequence is AVGVTHYLLGGIATTWAFFLA.

The protein belongs to the PsaA/PsaB family. The PsaA/B heterodimer binds the P700 chlorophyll special pair and subsequent electron acceptors. PSI consists of a core antenna complex that captures photons, and an electron transfer chain that converts photonic excitation into a charge separation. The eukaryotic PSI reaction center is composed of at least 11 subunits. P700 is a chlorophyll a/chlorophyll a' dimer, A0 is one or more chlorophyll a, A1 is one or both phylloquinones and FX is a shared 4Fe-4S iron-sulfur center. serves as cofactor.

It is found in the plastid. The protein localises to the chloroplast thylakoid membrane. It carries out the reaction reduced [plastocyanin] + hnu + oxidized [2Fe-2S]-[ferredoxin] = oxidized [plastocyanin] + reduced [2Fe-2S]-[ferredoxin]. In terms of biological role, psaA and PsaB bind P700, the primary electron donor of photosystem I (PSI), as well as the electron acceptors A0, A1 and FX. PSI is a plastocyanin-ferredoxin oxidoreductase, converting photonic excitation into a charge separation, which transfers an electron from the donor P700 chlorophyll pair to the spectroscopically characterized acceptors A0, A1, FX, FA and FB in turn. Oxidized P700 is reduced on the lumenal side of the thylakoid membrane by plastocyanin. The protein is Photosystem I P700 chlorophyll a apoprotein A1 of Nandina domestica (Heavenly bamboo).